The following is a 332-amino-acid chain: tRNA dimethylallyltransferase (332 aa).

Position 17 to 24 (17 to 24 (GPTCSGKS)) interacts with ATP. Residue 19-24 (TCSGKS) coordinates substrate. 2 interaction with substrate tRNA regions span residues 42 to 45 (DSMQ) and 166 to 170 (QRVAR).

The protein belongs to the IPP transferase family. In terms of assembly, monomer. The cofactor is Mg(2+).

It carries out the reaction adenosine(37) in tRNA + dimethylallyl diphosphate = N(6)-dimethylallyladenosine(37) in tRNA + diphosphate. In terms of biological role, catalyzes the transfer of a dimethylallyl group onto the adenine at position 37 in tRNAs that read codons beginning with uridine, leading to the formation of N6-(dimethylallyl)adenosine (i(6)A). The sequence is that of tRNA dimethylallyltransferase from Gluconacetobacter diazotrophicus (strain ATCC 49037 / DSM 5601 / CCUG 37298 / CIP 103539 / LMG 7603 / PAl5).